The sequence spans 226 residues: Isoprenyl transferase (226 aa).

The active site involves D12. Position 12 (D12) interacts with Mg(2+). Residues 13–16 (GNAR), W17, K25, H29, and 57–59 (SSE) contribute to the substrate site. The Proton acceptor role is filled by N60. Substrate contacts are provided by residues W61, R63, R174, and 180–182 (RIS). E193 is a binding site for Mg(2+).

It belongs to the UPP synthase family. In terms of assembly, homodimer. It depends on Mg(2+) as a cofactor.

Functionally, catalyzes the condensation of isopentenyl diphosphate (IPP) with allylic pyrophosphates generating different type of terpenoids. In Rickettsia sibirica (strain ATCC VR-151 / 246), this protein is Isoprenyl transferase.